A 147-amino-acid polypeptide reads, in one-letter code: Large ribosomal subunit protein uL13 (147 aa).

The protein belongs to the universal ribosomal protein uL13 family. In terms of assembly, part of the 50S ribosomal subunit.

Its function is as follows. This protein is one of the early assembly proteins of the 50S ribosomal subunit, although it is not seen to bind rRNA by itself. It is important during the early stages of 50S assembly. In Lactobacillus delbrueckii subsp. bulgaricus (strain ATCC 11842 / DSM 20081 / BCRC 10696 / JCM 1002 / NBRC 13953 / NCIMB 11778 / NCTC 12712 / WDCM 00102 / Lb 14), this protein is Large ribosomal subunit protein uL13.